The chain runs to 396 residues: Phosphoglycerate kinase (396 aa).

Substrate contacts are provided by residues 21–23 (DFN), Arg36, 59–62 (HLGK), Arg119, and Arg156. Residues Lys206, Gly294, Glu325, and 352–355 (GGDS) each bind ATP.

This sequence belongs to the phosphoglycerate kinase family. In terms of assembly, monomer.

The protein resides in the cytoplasm. The enzyme catalyses (2R)-3-phosphoglycerate + ATP = (2R)-3-phospho-glyceroyl phosphate + ADP. Its pathway is carbohydrate degradation; glycolysis; pyruvate from D-glyceraldehyde 3-phosphate: step 2/5. The polypeptide is Phosphoglycerate kinase (Listeria innocua serovar 6a (strain ATCC BAA-680 / CLIP 11262)).